Consider the following 352-residue polypeptide: Nuclear receptor subfamily 1 group I member 3 (352 aa).

The segment at residues 8–83 (LRNCVVCGDQ…AGMRKDMILS (76 aa)) is a DNA-binding region (nuclear receptor). Residues 11–31 (CVVCGDQATGYHFNALTCEGC) form an NR C4-type zinc finger. The residue at position 38 (Thr38) is a Phosphothreonine; by PKC. Residues 47-71 (CPFAGSCEVSKIQRRHCPACRLQKC) form an NR C4-type zinc finger. The NR LBD domain maps to 109-352 (EQEELIQTLL…MMPLLQEICS (244 aa)).

It belongs to the nuclear hormone receptor family. NR1 subfamily. Heterodimer of NR1I3 and RXR. Interacts with PSMC4. Interacts with ECT2. Directly interacts with DNAJC7; this complex may also include HSP90. Interacts with CRY1. Interacts with CRY2 in a ligand-dependent manner. In terms of processing, phosphorylated at Thr-38 by PKC, dephosphorylation of Thr-38 is required for nuclear translocation and activation.

The protein localises to the nucleus. Its subcellular location is the cytoplasm. It is found in the cytoskeleton. Its function is as follows. Binds and transactivates the retinoic acid response elements that control expression of the retinoic acid receptor beta 2 and alcohol dehydrogenase 3 genes. Transactivates both the phenobarbital responsive element module of the human CYP2B6 gene and the CYP3A4 xenobiotic response element. The chain is Nuclear receptor subfamily 1 group I member 3 (NR1I3) from Macaca mulatta (Rhesus macaque).